We begin with the raw amino-acid sequence, 512 residues long: Anaerobic nitric oxide reductase transcription regulator NorR (512 aa).

The Sigma-54 factor interaction domain maps to 190–419; the sequence is MIGESLAMQE…LEHVISRAAV (230 aa). Residues 218–225 and 281–290 each bind ATP; these read GETGVGKE and ADNGTLFLDE. The segment at residues 487 to 506 is a DNA-binding region (H-T-H motif); it reads WAATARALQLDTGNLHRLAK.

Its pathway is nitrogen metabolism; nitric oxide reduction. In terms of biological role, required for the expression of anaerobic nitric oxide (NO) reductase, acts as a transcriptional activator for at least the norVW operon. Activation also requires sigma-54. The polypeptide is Anaerobic nitric oxide reductase transcription regulator NorR (Aliivibrio fischeri (strain ATCC 700601 / ES114) (Vibrio fischeri)).